A 1809-amino-acid polypeptide reads, in one-letter code: Pyochelin synthetase PchF (1809 aa).

The interval 69–490 is condensation/cyclization; the sequence is FPLTPVQAAY…GLLRRLAQSP (422 aa). The tract at residues 520–915 is adenylation; that stretch reads FAERALLTPD…GREDDQVKIR (396 aa). Residues 1407 to 1488 enclose the Carrier domain; it reads APADELESAL…GLAERLRSAP (82 aa). Position 1442 is an O-(pantetheine 4'-phosphoryl)serine (Ser1442). Residues 1584–1797 form a thioesterase region; that stretch reads LGRRYAEALH…FDCLGEALAQ (214 aa).

This sequence belongs to the NRP synthetase family. Requires pantetheine 4'-phosphate as cofactor.

The catalysed reaction is holo-[peptidyl-carrier protein] + L-cysteine + ATP = L-cysteinyl-[peptidyl-carrier protein] + AMP + diphosphate. It functions in the pathway siderophore biosynthesis. Its function is as follows. Involved in the biosynthesis of the siderophore pyochelin. Adenylates L-cysteine and loads it onto its peptidyl carrier domain via a thioester linkage to the phosphopanthetheine moiety. Then forms a peptide bond between the salicyl-thiazolinyl intermediate bound to the second carrier domain of PchE and the cysteine bound to its own peptidyl carrier domain to form the salicyl-thiazolinyl-cysteinyl-S-PCP2 intermediate. It subsequently cyclizes the C-terminal cysteine to form the second thiazoline heterocycle in the salicyl-thiazolinyl-thiazolinyl-S-PCP2 intermediate. When this intermediate is released by the action of a thioesterase, it produces the tricyclic acid hydroxyphenyl-thiazolyl-thiazolinyl-carboxylic acid (HPTT-COOH), an advanced intermediate containing the aryl-4,2-bis-heterocyclic skeleton of the bithiazoline class of siderophores. The sequence is that of Pyochelin synthetase PchF from Pseudomonas aeruginosa (strain UCBPP-PA14).